A 303-amino-acid polypeptide reads, in one-letter code: Glycine--tRNA ligase alpha subunit (303 aa).

The protein belongs to the class-II aminoacyl-tRNA synthetase family. As to quaternary structure, tetramer of two alpha and two beta subunits.

The protein resides in the cytoplasm. It catalyses the reaction tRNA(Gly) + glycine + ATP = glycyl-tRNA(Gly) + AMP + diphosphate. In Erwinia tasmaniensis (strain DSM 17950 / CFBP 7177 / CIP 109463 / NCPPB 4357 / Et1/99), this protein is Glycine--tRNA ligase alpha subunit.